Consider the following 225-residue polypeptide: C-reactive protein (225 aa).

Residues 1–18 (MLVVFLCLLSVTLEATEG) form the signal peptide. The Pentraxin (PTX) domain maps to 23 to 225 (SGKVLQFKTA…TGNVLVATDN (203 aa)). A disulfide bridge links cysteine 54 with cysteine 116. 5 residues coordinate Ca(2+): aspartate 78, aspartate 157, proline 158, aspartate 159, and glutamine 169.

The protein belongs to the pentraxin family. In terms of assembly, homotrimer. Ca(2+) serves as cofactor.

Its subcellular location is the secreted. Displays several functions associated with host defense: it promotes agglutination, bacterial capsular swelling, phagocytosis, and complement fixation through its calcium-dependent binding to phosphorylcholine. In Danio rerio (Zebrafish), this protein is C-reactive protein.